The primary structure comprises 141 residues: Hemoglobin subunit alpha-D (141 aa).

In terms of domain architecture, Globin spans 1-141 (MLTAEDKKLI…VAAVLAEKYR (141 aa)). Positions 58 and 87 each coordinate heme b.

Belongs to the globin family. As to quaternary structure, heterotetramer of two alpha-D chains and two beta chains. As to expression, red blood cells.

In terms of biological role, involved in oxygen transport from the lung to the various peripheral tissues. This chain is Hemoglobin subunit alpha-D (HBAD), found in Anas platyrhynchos (Mallard).